The following is a 259-amino-acid chain: 5'-nucleotidase SurE (259 aa).

Residues D8, D9, S41, and N99 each contribute to the a divalent metal cation site.

It belongs to the SurE nucleotidase family. A divalent metal cation is required as a cofactor.

It is found in the cytoplasm. It catalyses the reaction a ribonucleoside 5'-phosphate + H2O = a ribonucleoside + phosphate. In terms of biological role, nucleotidase that shows phosphatase activity on nucleoside 5'-monophosphates. This chain is 5'-nucleotidase SurE, found in Synechococcus sp. (strain JA-3-3Ab) (Cyanobacteria bacterium Yellowstone A-Prime).